The following is a 592-amino-acid chain: Threonine dehydratase biosynthetic, chloroplastic (592 aa).

A chloroplast-targeting transit peptide spans 1 to 91; sequence MNSVQLPTAQ…NEAENGSIAE (91 aa). The residue at position 141 (lysine 141) is an N6-(pyridoxal phosphate)lysine. ACT-like domains lie at 419-490 and 512-583; these read AVLA…NLTT and VLCR…LVSD.

Belongs to the serine/threonine dehydratase family. The cofactor is pyridoxal 5'-phosphate.

The protein resides in the plastid. It localises to the chloroplast. The catalysed reaction is L-threonine = 2-oxobutanoate + NH4(+). The protein operates within amino-acid biosynthesis; L-isoleucine biosynthesis; 2-oxobutanoate from L-threonine: step 1/1. With respect to regulation, allosterically inhibited by isoleucine. Strain GM11b is isoleucine feedback insensitive and is resistant to the antimetabolite L-O-methylthreonine. Its function is as follows. Catalyzes the formation of alpha-ketobutyrate from threonine in a two-step reaction. The first step is a dehydration of threonine, followed by rehydration and liberation of ammonia. The polypeptide is Threonine dehydratase biosynthetic, chloroplastic (OMR1) (Arabidopsis thaliana (Mouse-ear cress)).